Reading from the N-terminus, the 382-residue chain is MQDAAPRLTFTLRDEERLMMKIGVFVPIGNNGWLISTHAPQYMPTFELNKAIAQKAEHYHFDFALSMIKLRGFGGKTEFWDHNLESFTLMAGLAAVTSRIQIYATAATLTLPPAIVARMAATIDSISGGRFGVNLVTGWQKPEYEQMGIWPGDDYFSRRYDYLTEYVQVLRDLWGTGKSDFKGDFFTMNDCRVSPQPSIPMKVICAGQSDAGMAFSAQYADFNFCFGKGVNTPTAFAPTAARMKQATEQTGRDVGSYVLFMVIADETDDATRAKWEHYKAGADEEALSWLTEQSQKDTRSGTDTNVRQMADPTSAVNINMGTLVGSYASVARMLDEVASVPGAEGVLLTFDDFLSGIETFGERIQPLMQCRAHLSALTQEVA.

Residues 68-69, N134, E143, 159-160, and S209 contribute to the FMN site; these read IK and RY.

Belongs to the NtaA/SnaA/DszA monooxygenase family. RutA subfamily.

The catalysed reaction is uracil + FMNH2 + NADH + O2 = (Z)-3-ureidoacrylate + FMN + NAD(+) + H2O + H(+). It carries out the reaction thymine + FMNH2 + NADH + O2 = (Z)-2-methylureidoacrylate + FMN + NAD(+) + H2O + H(+). Functionally, catalyzes the pyrimidine ring opening between N-3 and C-4 by an unusual flavin hydroperoxide-catalyzed mechanism, adding oxygen atoms in the process to yield ureidoacrylate peracid, that immediately reacts with FMN forming ureidoacrylate and FMN-N(5)-oxide. The FMN-N(5)-oxide reacts spontaneously with NADH to produce FMN. Requires the flavin reductase RutF to regenerate FMN in vivo. This is Pyrimidine monooxygenase RutA from Shigella flexneri serotype X (strain 2002017).